We begin with the raw amino-acid sequence, 141 residues long: Protein C19orf12 homolog (141 aa).

The helical transmembrane segment at 33–53 threads the bilayer; the sequence is LVAAAGAFLGGLVGGPPGIAV.

The protein belongs to the C19orf12 family.

The protein localises to the mitochondrion. Its subcellular location is the mitochondrion membrane. It is found in the endoplasmic reticulum. The protein resides in the cytoplasm. It localises to the cytosol. In Xenopus tropicalis (Western clawed frog), this protein is Protein C19orf12 homolog.